We begin with the raw amino-acid sequence, 556 residues long: Urocanate hydratase (556 aa).

NAD(+) is bound by residues 52-53 (GG), Gln-130, 176-178 (GMG), Glu-196, Arg-201, 242-243 (NA), 263-267 (QTSAH), 273-274 (YL), and Tyr-322. The active site involves Cys-410. Gly-492 lines the NAD(+) pocket.

This sequence belongs to the urocanase family. The cofactor is NAD(+).

It is found in the cytoplasm. The catalysed reaction is 4-imidazolone-5-propanoate = trans-urocanate + H2O. Its pathway is amino-acid degradation; L-histidine degradation into L-glutamate; N-formimidoyl-L-glutamate from L-histidine: step 2/3. Catalyzes the conversion of urocanate to 4-imidazolone-5-propionate. The chain is Urocanate hydratase from Shewanella sp. (strain ANA-3).